We begin with the raw amino-acid sequence, 35 residues long: Conotoxin M11.2 (35 aa).

4 cysteine pairs are disulfide-bonded: Cys2–Cys16, Cys9–Cys21, Cys15–Cys26, and Cys20–Cys33.

This sequence belongs to the conotoxin I1 superfamily. Expressed by the venom duct.

It is found in the secreted. This chain is Conotoxin M11.2, found in Conus magus (Magical cone).